Reading from the N-terminus, the 300-residue chain is Bifunctional protein FolD (300 aa).

NADP(+) contacts are provided by residues 169–171 (GRG), Ser196, and Ile237.

The protein belongs to the tetrahydrofolate dehydrogenase/cyclohydrolase family. In terms of assembly, homodimer.

It catalyses the reaction (6R)-5,10-methylene-5,6,7,8-tetrahydrofolate + NADP(+) = (6R)-5,10-methenyltetrahydrofolate + NADPH. It carries out the reaction (6R)-5,10-methenyltetrahydrofolate + H2O = (6R)-10-formyltetrahydrofolate + H(+). It participates in one-carbon metabolism; tetrahydrofolate interconversion. Catalyzes the oxidation of 5,10-methylenetetrahydrofolate to 5,10-methenyltetrahydrofolate and then the hydrolysis of 5,10-methenyltetrahydrofolate to 10-formyltetrahydrofolate. The protein is Bifunctional protein FolD of Clavibacter michiganensis subsp. michiganensis (strain NCPPB 382).